Reading from the N-terminus, the 111-residue chain is UPF0339 protein ACIAD0721 (111 aa).

Tandem repeats lie at residues 10-58 (AKDG…RYER) and 61-109 (AKND…VKDL). The disordered stretch occupies residues 89–111 (SRDKGIESVKNNGTTATVKDLTG).

Belongs to the UPF0339 family. Duplicated subfamily.

The sequence is that of UPF0339 protein ACIAD0721 from Acinetobacter baylyi (strain ATCC 33305 / BD413 / ADP1).